The chain runs to 115 residues: MNNYIRNIENQYKKKNIPSFKSGDSIIVKIWILEGEKKRIQSFEGIVIAKRNRNLNSSFTVRKISNGEGVERKFLIHSPNIHEIKIVRKGLVRKAKLYYLRSRIGKSARIKESLK.

Belongs to the bacterial ribosomal protein bL19 family.

Its function is as follows. This protein is located at the 30S-50S ribosomal subunit interface and may play a role in the structure and function of the aminoacyl-tRNA binding site. The chain is Large ribosomal subunit protein bL19 from Buchnera aphidicola subsp. Cinara cedri (strain Cc).